We begin with the raw amino-acid sequence, 440 residues long: Chromosome partition protein MukF (440 aa).

The leucine-zipper stretch occupies residues 208-236; the sequence is LDETSGNLRELQDTLNAAGDKLQSQLLRI.

This sequence belongs to the MukF family. In terms of assembly, interacts, and probably forms a ternary complex, with MukE and MukB via its C-terminal region. The complex formation is stimulated by calcium or magnesium. It is required for an interaction between MukE and MukB.

The protein localises to the cytoplasm. Its subcellular location is the nucleoid. Involved in chromosome condensation, segregation and cell cycle progression. May participate in facilitating chromosome segregation by condensation DNA from both sides of a centrally located replisome during cell division. Not required for mini-F plasmid partitioning. Probably acts via its interaction with MukB and MukE. Overexpression results in anucleate cells. It has a calcium binding activity. This is Chromosome partition protein MukF from Histophilus somni (strain 2336) (Haemophilus somnus).